Reading from the N-terminus, the 734-residue chain is MALRFPRFSQGLAQDPTTRRIWFGIATAHDFESHDDITEERLYQNIFASHFGQLAIIFLWTSGNLFHVAWQGNFEAWVQDPLHVRPIAHAIWDPHFGQPAVEAFTRGGALGPVNIAYSGVYQWWYTIGLRTNEDLYTGALFLLFLSAISLIAGWLHLQPKWKPSVSWFKNAESRLNHHLSGLFGVSSLAWTGHLVHVAIPGSRGEYVRWNNFLDVLPHPEGLGPLFTGQWNLYAQNPDSNSHLFGTSQGSGTAILTLLGGFHPQTQSLWLTDIAHHHLAIAFIFLVAGHMYRTNFGIGHSIKDLLEAHTPPGGRLGRGHKGLYDTINNSIHFQLGLALASLGVITSLVAQHMYSLPAYAFIAQDFTTQAALYTHHQYIAGFIMTGAFAHGAIFFIRDYNPEQNEDNVLARMLDHKEAIISHLSWASLFLGFHTLGLYVHNDVMLAFGTPEKQILIEPIFAQWIQSAHGKTSYGFDVLLSSTNSPAFNAGQSIWLPGWLNAINENSNSLFLTIGPGDFLVHHAIALGLHTTTLILVKGALDARGSKLMPDKKDFGYSFPCDGPGRGGTCDISAWDAFYLAVFWMLNTIGWVTFYWHWKHITLWQGNVSQFNESSTYLMGWLRDYLWVNSSQLINGYNPFGMNSLSVWAWMFLFGHLVWATGFMFLISWRGYWQELIETLAWAHERTPLANLIRWRDKPVALSIVQARLVGLAHFSVGYIFTYAAFLIASTSGKFG.

The next 8 helical transmembrane spans lie at 46–69, 135–158, 175–199, 273–291, 330–353, 369–395, 417–439, and 517–535; these read IFAS…FHVA, LYTG…LHLQ, LNHH…HVAI, IAHH…GHMY, IHFQ…QHMY, AALY…IFFI, AIIS…LYVH, and FLVH…LILV. Residues C559 and C568 each contribute to the [4Fe-4S] cluster site. A run of 2 helical transmembrane segments spans residues 575–596 and 643–665; these read AFYL…YWHW and LSVW…MFLI. Chlorophyll a-binding residues include H654, M662, and Y670. W671 is a binding site for phylloquinone. Residues 707 to 727 traverse the membrane as a helical segment; it reads LVGLAHFSVGYIFTYAAFLIA.

The protein belongs to the PsaA/PsaB family. As to quaternary structure, the PsaA/B heterodimer binds the P700 chlorophyll special pair and subsequent electron acceptors. PSI consists of a core antenna complex that captures photons, and an electron transfer chain that converts photonic excitation into a charge separation. The eukaryotic PSI reaction center is composed of at least 11 subunits. The cofactor is P700 is a chlorophyll a/chlorophyll a' dimer, A0 is one or more chlorophyll a, A1 is one or both phylloquinones and FX is a shared 4Fe-4S iron-sulfur center..

It is found in the plastid. The protein localises to the chloroplast thylakoid membrane. The enzyme catalyses reduced [plastocyanin] + hnu + oxidized [2Fe-2S]-[ferredoxin] = oxidized [plastocyanin] + reduced [2Fe-2S]-[ferredoxin]. Its function is as follows. PsaA and PsaB bind P700, the primary electron donor of photosystem I (PSI), as well as the electron acceptors A0, A1 and FX. PSI is a plastocyanin-ferredoxin oxidoreductase, converting photonic excitation into a charge separation, which transfers an electron from the donor P700 chlorophyll pair to the spectroscopically characterized acceptors A0, A1, FX, FA and FB in turn. Oxidized P700 is reduced on the lumenal side of the thylakoid membrane by plastocyanin. This is Photosystem I P700 chlorophyll a apoprotein A2 from Eucalyptus globulus subsp. globulus (Tasmanian blue gum).